A 197-amino-acid polypeptide reads, in one-letter code: Isochorismatase domain-containing protein 2 (197 aa).

It belongs to the isochorismatase family.

The sequence is that of Isochorismatase domain-containing protein 2 (isoc2) from Danio rerio (Zebrafish).